Consider the following 94-residue polypeptide: Small ribosomal subunit protein uS19 (94 aa).

Belongs to the universal ribosomal protein uS19 family.

In terms of biological role, protein S19 forms a complex with S13 that binds strongly to the 16S ribosomal RNA. In Natranaerobius thermophilus (strain ATCC BAA-1301 / DSM 18059 / JW/NM-WN-LF), this protein is Small ribosomal subunit protein uS19.